A 484-amino-acid polypeptide reads, in one-letter code: uncharacterized protein (484 aa).

One can recognise an FAD-binding PCMH-type domain in the interval 47–226 (TLPIPAAVVK…TEVTVKIFKF (180 aa)).

It belongs to the FAD-binding oxidoreductase/transferase type 4 family.

This is an uncharacterized protein from Escherichia coli O157:H7.